We begin with the raw amino-acid sequence, 92 residues long: RNA-binding protein Hfq (92 aa).

The region spanning 9–68 (DPFLNALRRERVPVSIYLVNGIKLQGQVESFDQFVILLKNTVSQMVYKHAISTVVPSRPF) is the Sm domain. The span at 73 to 82 (HQATNAQAGY) shows a compositional bias: polar residues. Residues 73–92 (HQATNAQAGYNAQHDDGDEK) form a disordered region.

Belongs to the Hfq family. Homohexamer.

Functionally, RNA chaperone that binds small regulatory RNA (sRNAs) and mRNAs to facilitate mRNA translational regulation in response to envelope stress, environmental stress and changes in metabolite concentrations. Also binds with high specificity to tRNAs. This chain is RNA-binding protein Hfq, found in Shewanella pealeana (strain ATCC 700345 / ANG-SQ1).